Reading from the N-terminus, the 446-residue chain is Tubulin beta-6 chain (446 aa).

GTP-binding residues include Gln11, Glu69, Ser138, Gly142, Thr143, Gly144, Asn204, and Asn226. Glu69 is a binding site for Mg(2+). The disordered stretch occupies residues 426–446 (QDATADEEEYEDEEEVQADDM). A compositionally biased stretch (acidic residues) spans 429–446 (TADEEEYEDEEEVQADDM).

The protein belongs to the tubulin family. Dimer of alpha and beta chains. A typical microtubule is a hollow water-filled tube with an outer diameter of 25 nm and an inner diameter of 15 nM. Alpha-beta heterodimers associate head-to-tail to form protofilaments running lengthwise along the microtubule wall with the beta-tubulin subunit facing the microtubule plus end conferring a structural polarity. Microtubules usually have 13 protofilaments but different protofilament numbers can be found in some organisms and specialized cells. Requires Mg(2+) as cofactor.

It localises to the cytoplasm. It is found in the cytoskeleton. Tubulin is the major constituent of microtubules, a cylinder consisting of laterally associated linear protofilaments composed of alpha- and beta-tubulin heterodimers. Microtubules grow by the addition of GTP-tubulin dimers to the microtubule end, where a stabilizing cap forms. Below the cap, tubulin dimers are in GDP-bound state, owing to GTPase activity of alpha-tubulin. This is Tubulin beta-6 chain (TUBB6) from Zea mays (Maize).